A 356-amino-acid chain; its full sequence is Outer membrane protein Omp38 (356 aa).

A signal peptide spans 1 to 19 (MKLSRIALATMLVAAPLAA). Positions 221-339 (ELTEDLNMEL…RVFATITGSR (119 aa)) constitute an OmpA-like domain. Meso-2,6-diaminopimelate contacts are provided by asparagine 237, aspartate 271, threonine 273, asparagine 279, and arginine 286.

This sequence belongs to the outer membrane OOP (TC 1.B.6) superfamily. In terms of assembly, homotrimer. Forms a pore with a size of 1.3 nm.

It localises to the cell outer membrane. The protein resides in the host mitochondrion. Functionally, functions as a porin. Induces apoptosis in human cell lines through caspase-dependent and AIF-dependent pathways. Purified Omp38 enters host cell and localizes to the mitochondria, which presumably leads to a release of proapoptotic molecules such as cytochrome c and AIF (apoptosis-inducing factor). Binds peptidoglycan, contributes to cell wall maintenance. The protein is Outer membrane protein Omp38 of Acinetobacter baumannii (strain ATCC 19606 / DSM 30007 / JCM 6841 / CCUG 19606 / CIP 70.34 / NBRC 109757 / NCIMB 12457 / NCTC 12156 / 81).